Here is a 491-residue protein sequence, read N- to C-terminus: 1-aminocyclopropane-1-carboxylate synthase (491 aa).

N6-(pyridoxal phosphate)lysine is present on K278.

It belongs to the class-I pyridoxal-phosphate-dependent aminotransferase family. In terms of assembly, homodimer. Requires pyridoxal 5'-phosphate as cofactor.

The catalysed reaction is S-adenosyl-L-methionine = 1-aminocyclopropane-1-carboxylate + S-methyl-5'-thioadenosine + H(+). It participates in alkene biosynthesis; ethylene biosynthesis via S-adenosyl-L-methionine; ethylene from S-adenosyl-L-methionine: step 1/2. In terms of biological role, catalyzes the formation of 1-aminocyclopropane-1-carboxylate, a direct precursor of ethylene in higher plants. This Nicotiana tabacum (Common tobacco) protein is 1-aminocyclopropane-1-carboxylate synthase (ACS1).